The following is a 530-amino-acid chain: Bifunctional purine biosynthesis protein PurH (530 aa).

Positions M1–V148 constitute an MGS-like domain.

It belongs to the PurH family.

The catalysed reaction is (6R)-10-formyltetrahydrofolate + 5-amino-1-(5-phospho-beta-D-ribosyl)imidazole-4-carboxamide = 5-formamido-1-(5-phospho-D-ribosyl)imidazole-4-carboxamide + (6S)-5,6,7,8-tetrahydrofolate. The enzyme catalyses IMP + H2O = 5-formamido-1-(5-phospho-D-ribosyl)imidazole-4-carboxamide. Its pathway is purine metabolism; IMP biosynthesis via de novo pathway; 5-formamido-1-(5-phospho-D-ribosyl)imidazole-4-carboxamide from 5-amino-1-(5-phospho-D-ribosyl)imidazole-4-carboxamide (10-formyl THF route): step 1/1. It participates in purine metabolism; IMP biosynthesis via de novo pathway; IMP from 5-formamido-1-(5-phospho-D-ribosyl)imidazole-4-carboxamide: step 1/1. The sequence is that of Bifunctional purine biosynthesis protein PurH from Vibrio vulnificus (strain YJ016).